Consider the following 285-residue polypeptide: Protoheme IX farnesyltransferase (285 aa).

9 helical membrane-spanning segments follow: residues 13–33 (LGKL…AFLA), 40–60 (LLPI…AMII), 89–109 (EAII…FIDN), 110–130 (ILTA…YTIL), 137–157 (LNIV…YTSL), 165–185 (GFLL…SLAL), 194–214 (AHYP…AIAI), 230–252 (INLI…SYRL), and 265–285 (FIFS…VKLI).

Belongs to the UbiA prenyltransferase family. Protoheme IX farnesyltransferase subfamily.

It localises to the cell membrane. The catalysed reaction is heme b + (2E,6E)-farnesyl diphosphate + H2O = Fe(II)-heme o + diphosphate. The protein operates within porphyrin-containing compound metabolism; heme O biosynthesis; heme O from protoheme: step 1/1. Its function is as follows. Converts heme B (protoheme IX) to heme O by substitution of the vinyl group on carbon 2 of heme B porphyrin ring with a hydroxyethyl farnesyl side group. This is Protoheme IX farnesyltransferase from Saccharolobus islandicus (strain Y.N.15.51 / Yellowstone #2) (Sulfolobus islandicus).